A 226-amino-acid chain; its full sequence is Ornithine decarboxylase antizyme (226 aa).

Belongs to the ODC antizyme family. Interacts with ODC and thereby sterically blocks ODC homodimerization.

In terms of biological role, ornithine decarboxylase (ODC) antizyme protein that negatively regulates ODC activity and intracellular polyamine biosynthesis in response to increased intracellular polyamine levels. Binds to ODC monomers, inhibiting the assembly of the functional ODC homodimer, and targets the monomers for ubiquitin-independent proteolytic destruction by the 26S proteasome. The polypeptide is Ornithine decarboxylase antizyme (spa1) (Schizosaccharomyces japonicus (Fission yeast)).